Here is a 790-residue protein sequence, read N- to C-terminus: Ribosome biogenesis protein ERB1 (790 aa).

Positions 1–93 are disordered; it reads MAKKNTVTGS…SDELQDDSNS (93 aa). The segment covering 20–89 has biased composition (acidic residues); that stretch reads SPEVSESEEI…SEDFSDELQD (70 aa). A required for interaction with NOP7 region spans residues 255–371; sequence RFVPSKHEAK…LRKVPAYQEN (117 aa). The segment at 371–407 is required for interaction with YTM1; it reads NLRERFERSLDLYLAPRVRHNKLNIDPDSLIPDLPSP. WD repeat units follow at residues 423–462, 470–510, 574–616, 619–657, 660–699, 703–743, and 759–790; these read GHIGRVRTLSIDPSGLWLATGGDDGTVRVWEILTGRQVYH, KDDD…YEIE, QCRK…SQSP, KSKGIIVDAKFHPFKPQLFVASQRSIKIYDLSQQVLTKK, PGARYLSGIDIHPRGDHLLASSYDKRVLWHDLDLSNTPYK, YHEK…DLMT, and VHSLGVLDLVWHPKEAWLFTAGADGTARLWTT.

The protein belongs to the WD repeat BOP1/ERB1 family. As to quaternary structure, component of the NOP7 complex, composed of ERB1, NOP7 and YTM1. The complex is held together by ERB1, which interacts with NOP7 via its N-terminal domain and with YTM1 via a high-affinity interaction between the seven-bladed beta-propeller domains of the 2 proteins. The NOP7 complex associates with the 66S pre-ribosome.

The protein resides in the nucleus. The protein localises to the nucleolus. It is found in the nucleoplasm. Functionally, component of the NOP7 complex, which is required for maturation of the 25S and 5.8S ribosomal RNAs and formation of the 60S ribosome. The polypeptide is Ribosome biogenesis protein ERB1 (Meyerozyma guilliermondii (strain ATCC 6260 / CBS 566 / DSM 6381 / JCM 1539 / NBRC 10279 / NRRL Y-324) (Yeast)).